A 261-amino-acid polypeptide reads, in one-letter code: Cytochrome c oxidase subunit 3 (261 aa).

Topologically, residues methionine 1–proline 15 are mitochondrial matrix. Residues tryptophan 16–methionine 33 form a helical membrane-spanning segment. Residues tryptophan 34–asparagine 38 lie on the Mitochondrial intermembrane side of the membrane. Residues serine 39–isoleucine 62 form a helical membrane-spanning segment. The Mitochondrial matrix portion of the chain corresponds to arginine 63–lysine 77. Residues glycine 78–tryptophan 99 form a helical membrane-spanning segment. Over alanine 100 to valine 129 the chain is Mitochondrial intermembrane. A helical membrane pass occupies residues proline 130 to serine 150. Topologically, residues leucine 151–arginine 156 are mitochondrial matrix. The helical transmembrane segment at asparagine 157–alanine 178 threads the bilayer. Residues serine 179–phenylalanine 198 lie on the Mitochondrial intermembrane side of the membrane. The helical transmembrane segment at methionine 199–lysine 224 threads the bilayer. The Mitochondrial matrix segment spans residues phenylalanine 225 to histidine 232. A helical transmembrane segment spans residues phenylalanine 233 to serine 255. The Mitochondrial intermembrane segment spans residues isoleucine 256–serine 261.

Belongs to the cytochrome c oxidase subunit 3 family. As to quaternary structure, component of the cytochrome c oxidase (complex IV, CIV), a multisubunit enzyme composed of 14 subunits. The complex is composed of a catalytic core of 3 subunits MT-CO1, MT-CO2 and MT-CO3, encoded in the mitochondrial DNA, and 11 supernumerary subunits COX4I, COX5A, COX5B, COX6A, COX6B, COX6C, COX7A, COX7B, COX7C, COX8 and NDUFA4, which are encoded in the nuclear genome. The complex exists as a monomer or a dimer and forms supercomplexes (SCs) in the inner mitochondrial membrane with NADH-ubiquinone oxidoreductase (complex I, CI) and ubiquinol-cytochrome c oxidoreductase (cytochrome b-c1 complex, complex III, CIII), resulting in different assemblies (supercomplex SCI(1)III(2)IV(1) and megacomplex MCI(2)III(2)IV(2)).

The protein localises to the mitochondrion inner membrane. The enzyme catalyses 4 Fe(II)-[cytochrome c] + O2 + 8 H(+)(in) = 4 Fe(III)-[cytochrome c] + 2 H2O + 4 H(+)(out). Its function is as follows. Component of the cytochrome c oxidase, the last enzyme in the mitochondrial electron transport chain which drives oxidative phosphorylation. The respiratory chain contains 3 multisubunit complexes succinate dehydrogenase (complex II, CII), ubiquinol-cytochrome c oxidoreductase (cytochrome b-c1 complex, complex III, CIII) and cytochrome c oxidase (complex IV, CIV), that cooperate to transfer electrons derived from NADH and succinate to molecular oxygen, creating an electrochemical gradient over the inner membrane that drives transmembrane transport and the ATP synthase. Cytochrome c oxidase is the component of the respiratory chain that catalyzes the reduction of oxygen to water. Electrons originating from reduced cytochrome c in the intermembrane space (IMS) are transferred via the dinuclear copper A center (CU(A)) of subunit 2 and heme A of subunit 1 to the active site in subunit 1, a binuclear center (BNC) formed by heme A3 and copper B (CU(B)). The BNC reduces molecular oxygen to 2 water molecules using 4 electrons from cytochrome c in the IMS and 4 protons from the mitochondrial matrix. This Mus musculus (Mouse) protein is Cytochrome c oxidase subunit 3 (mt-Co3).